The following is a 407-amino-acid chain: Putative D-cysteine desulfhydrase 2, mitochondrial (407 aa).

Residues 1–34 (MRPSPALAGGGRTVANLLSATEWMLPSPATQVHT) constitute a mitochondrion transit peptide. The disordered stretch occupies residues 39 to 72 (PSHSPPSPPHHFAFSNLTTAPKRNGGKGEEEGRP). Position 90 is an N6-(pyridoxal phosphate)lysine (lysine 90).

This sequence belongs to the ACC deaminase/D-cysteine desulfhydrase family. The cofactor is pyridoxal 5'-phosphate.

It localises to the mitochondrion. The catalysed reaction is D-cysteine + H2O = hydrogen sulfide + pyruvate + NH4(+) + H(+). Its function is as follows. Catalyzes the production of hydrogen sulfide (H2S) from cysteine. The sequence is that of Putative D-cysteine desulfhydrase 2, mitochondrial from Oryza sativa subsp. japonica (Rice).